Consider the following 364-residue polypeptide: Putative transport protein BUsg_115 (364 aa).

A run of 9 helical transmembrane segments spans residues 18-38 (IFII…ILGF), 40-60 (WASM…KFLG), 65-85 (VAVI…IVFL), 161-181 (GLFI…YWNG), 215-235 (ALGV…GLLI), 243-263 (LLMI…PILI), 280-300 (LLLI…PFFI), 309-329 (FLIL…GLFI), and 331-351 (PVVL…ISIA).

It belongs to the autoinducer-2 exporter (AI-2E) (TC 2.A.86) family.

It is found in the cell membrane. This is Putative transport protein BUsg_115 from Buchnera aphidicola subsp. Schizaphis graminum (strain Sg).